The primary structure comprises 185 residues: Prorelaxin H1 (185 aa).

The first 22 residues, 1 to 22 (MPRLFLFHLLEFCLLLNQFSRA), serve as a signal peptide directing secretion. 3 disulfide bridges follow: cysteine 35–cysteine 172, cysteine 47–cysteine 185, and cysteine 171–cysteine 176. A propeptide spans 56 to 158 (SLSQEDAPQT…KYLGLDTHSQ (103 aa)) (connecting peptide).

The protein belongs to the insulin family. As to quaternary structure, heterodimer of a B chain and an A chain linked by two disulfide bonds. In terms of tissue distribution, prostate. Not expressed in placenta, decidua or ovary.

The protein resides in the secreted. Relaxin is an ovarian hormone that acts with estrogen to produce dilatation of the birth canal in many mammals. May be involved in remodeling of connective tissues during pregnancy, promoting growth of pubic ligaments and ripening of the cervix. This Homo sapiens (Human) protein is Prorelaxin H1 (RLN1).